The following is a 224-amino-acid chain: Ribonuclease T (224 aa).

The 175-residue stretch at 32-206 (VVVDVETGGF…YDTEKTAELF (175 aa)) folds into the Exonuclease domain. Residues D35, E37, H193, and D198 each contribute to the Mg(2+) site. H193 acts as the Proton donor/acceptor in catalysis.

It belongs to the RNase T family. Homodimer. Mg(2+) is required as a cofactor.

In terms of biological role, trims short 3' overhangs of a variety of RNA species, leaving a one or two nucleotide 3' overhang. Responsible for the end-turnover of tRNA: specifically removes the terminal AMP residue from uncharged tRNA (tRNA-C-C-A). Also appears to be involved in tRNA biosynthesis. This Pseudomonas paraeruginosa (strain DSM 24068 / PA7) (Pseudomonas aeruginosa (strain PA7)) protein is Ribonuclease T.